Consider the following 224-residue polypeptide: MNTTEQTSSLPSAGGENGVKLLLKYFPDLTEEQRKQFAALYELYIDWNSKINVISRKDIENLYEHHVLHSLGIARIIRFRAGSSVMDLGTGGGFPGIPLAILFPDTKFHLVDSIGKKVRVATEVANAIGLKNVTFRHARAEEEKQTFDFVVSRAVMPLADLIKIIRKNISPKQQNALPNGLICLKGGELEHEAMPFKHKTSMHNLNEDFDEEFFQTKKVVYVTI.

S-adenosyl-L-methionine is bound by residues glycine 89, phenylalanine 94, 140–141, and arginine 153; that span reads AE.

It belongs to the methyltransferase superfamily. RNA methyltransferase RsmG family.

Its subcellular location is the cytoplasm. In terms of biological role, specifically methylates the N7 position of a guanine in 16S rRNA. The sequence is that of Ribosomal RNA small subunit methyltransferase G from Bacteroides fragilis (strain YCH46).